A 208-amino-acid chain; its full sequence is Putative thymidylate kinase (208 aa).

Residues 12 to 19 (GIDGTGTS) are defective ATP-binding.

This sequence belongs to the thymidylate kinase family.

The catalysed reaction is dTMP + ATP = dTDP + ADP. This is Putative thymidylate kinase (tmk) from Treponema pallidum (strain Nichols).